Here is a 245-residue protein sequence, read N- to C-terminus: Biosynthetic peptidoglycan transglycosylase (245 aa).

Residues 19 to 39 (IVYAGAVFAAAWLATQLFYFV) traverse the membrane as a helical segment.

This sequence belongs to the glycosyltransferase 51 family.

The protein localises to the cell inner membrane. It carries out the reaction [GlcNAc-(1-&gt;4)-Mur2Ac(oyl-L-Ala-gamma-D-Glu-L-Lys-D-Ala-D-Ala)](n)-di-trans,octa-cis-undecaprenyl diphosphate + beta-D-GlcNAc-(1-&gt;4)-Mur2Ac(oyl-L-Ala-gamma-D-Glu-L-Lys-D-Ala-D-Ala)-di-trans,octa-cis-undecaprenyl diphosphate = [GlcNAc-(1-&gt;4)-Mur2Ac(oyl-L-Ala-gamma-D-Glu-L-Lys-D-Ala-D-Ala)](n+1)-di-trans,octa-cis-undecaprenyl diphosphate + di-trans,octa-cis-undecaprenyl diphosphate + H(+). The protein operates within cell wall biogenesis; peptidoglycan biosynthesis. Functionally, peptidoglycan polymerase that catalyzes glycan chain elongation from lipid-linked precursors. This Burkholderia multivorans (strain ATCC 17616 / 249) protein is Biosynthetic peptidoglycan transglycosylase.